We begin with the raw amino-acid sequence, 196 residues long: Imidazole glycerol phosphate synthase subunit HisH (196 aa).

One can recognise a Glutamine amidotransferase type-1 domain in the interval 2 to 196 (KIIIINTNCS…EQLIKNFLEI (195 aa)). Cys77 (nucleophile) is an active-site residue. Catalysis depends on residues His178 and Glu180.

In terms of assembly, heterodimer of HisH and HisF.

It is found in the cytoplasm. The catalysed reaction is 5-[(5-phospho-1-deoxy-D-ribulos-1-ylimino)methylamino]-1-(5-phospho-beta-D-ribosyl)imidazole-4-carboxamide + L-glutamine = D-erythro-1-(imidazol-4-yl)glycerol 3-phosphate + 5-amino-1-(5-phospho-beta-D-ribosyl)imidazole-4-carboxamide + L-glutamate + H(+). It carries out the reaction L-glutamine + H2O = L-glutamate + NH4(+). It participates in amino-acid biosynthesis; L-histidine biosynthesis; L-histidine from 5-phospho-alpha-D-ribose 1-diphosphate: step 5/9. Functionally, IGPS catalyzes the conversion of PRFAR and glutamine to IGP, AICAR and glutamate. The HisH subunit catalyzes the hydrolysis of glutamine to glutamate and ammonia as part of the synthesis of IGP and AICAR. The resulting ammonia molecule is channeled to the active site of HisF. The protein is Imidazole glycerol phosphate synthase subunit HisH of Blochmanniella floridana.